A 106-amino-acid polypeptide reads, in one-letter code: 3-oxoacyl-[acyl-carrier-protein] reductase (106 aa).

This sequence belongs to the short-chain dehydrogenases/reductases (SDR) family. Homotetramer. As to expression, mesocarp.

The protein resides in the plastid. The protein localises to the chloroplast. It catalyses the reaction a (3R)-hydroxyacyl-[ACP] + NADP(+) = a 3-oxoacyl-[ACP] + NADPH + H(+). It participates in lipid metabolism; fatty acid biosynthesis. The sequence is that of 3-oxoacyl-[acyl-carrier-protein] reductase from Persea americana (Avocado).